The chain runs to 130 residues: MARVTVEDCIDKVDNRFDLVLLAAHRARMISSGSQLTIDRDNDKNPVVSLREIAEQTVSPEDLKEELVHSLQKFVEVDEPEQDTVPLIGSAGASVDADDTEVALERMTEEELLKGLEGLAPPEEQPEEDE.

Residues 110 to 130 form a disordered region; the sequence is EELLKGLEGLAPPEEQPEEDE.

It belongs to the RNA polymerase subunit omega family. The RNAP catalytic core consists of 2 alpha, 1 beta, 1 beta' and 1 omega subunit. When a sigma factor is associated with the core the holoenzyme is formed, which can initiate transcription.

It catalyses the reaction RNA(n) + a ribonucleoside 5'-triphosphate = RNA(n+1) + diphosphate. Promotes RNA polymerase assembly. Latches the N- and C-terminal regions of the beta' subunit thereby facilitating its interaction with the beta and alpha subunits. This chain is DNA-directed RNA polymerase subunit omega, found in Rhodopseudomonas palustris (strain HaA2).